The sequence spans 320 residues: Delta(7)-sterol 5(6)-desaturase erg3C (320 aa).

Helical transmembrane passes span 43–63 (VISILVLTQLGATSLYLFFSA), 91–111 (SSLSAIPFINILTLPWFLAEV), and 127–147 (PWLVVSSILYMAFNDIGIYWI). In terms of domain architecture, Fatty acid hydroxylase spans 134–283 (ILYMAFNDIG…FTWADAYFGS (150 aa)). A Histidine box-1 motif is present at residues 148 to 152 (HRLEH). Residues 161–165 (HKPHH) carry the Histidine box-2 motif. Residues 224-244 (YMVLFAAVQIWTILIHDGDMI) traverse the membrane as a helical segment. The Histidine box-3 motif lies at 259–263 (HTLHH).

It belongs to the sterol desaturase family. The cofactor is Fe cation.

It localises to the endoplasmic reticulum membrane. Delta(7)-sterol 5(6)-desaturase; part of the third module of ergosterol biosynthesis pathway that includes the late steps of the pathway. Erg3C is a minor delta(7)-sterol 5(6)-desaturase within the ergosterol pathway, erg3B being the major one. The third module or late pathway involves the ergosterol synthesis itself through consecutive reactions that mainly occur in the endoplasmic reticulum (ER) membrane. Firstly, the squalene synthase erg9 catalyzes the condensation of 2 farnesyl pyrophosphate moieties to form squalene, which is the precursor of all steroids. Squalene synthase is crucial for balancing the incorporation of farnesyl diphosphate (FPP) into sterol and nonsterol isoprene synthesis. Secondly, squalene is converted into lanosterol by the consecutive action of the squalene epoxidase erg1 and the lanosterol synthase erg7. Then, the delta(24)-sterol C-methyltransferase erg6 methylates lanosterol at C-24 to produce eburicol. Eburicol is the substrate of the sterol 14-alpha demethylase encoded by cyp51A and cyp51B, to yield 4,4,24-trimethyl ergosta-8,14,24(28)-trienol. The C-14 reductase erg24 then reduces the C14=C15 double bond which leads to 4,4-dimethylfecosterol. A sequence of further demethylations at C-4, involving the C-4 demethylation complex containing the C-4 methylsterol oxidases erg25A or erg25B, the sterol-4-alpha-carboxylate 3-dehydrogenase erg26 and the 3-keto-steroid reductase erg27, leads to the production of fecosterol via 4-methylfecosterol. The C-8 sterol isomerase erg2 then catalyzes the reaction which results in unsaturation at C-7 in the B ring of sterols and thus converts fecosterol to episterol. The sterol-C5-desaturase erg3B then catalyzes the introduction of a C-5 double bond in the B ring to produce 5-dehydroepisterol. The 2 other sterol-C5-desaturases, erg3A and erg3C, seem to be less important in ergosterol biosynthesis. The C-22 sterol desaturase erg5 further converts 5-dehydroepisterol into ergosta-5,7,22,24(28)-tetraen-3beta-ol by forming the C-22(23) double bond in the sterol side chain. Finally, ergosta-5,7,22,24(28)-tetraen-3beta-ol is substrate of the C-24(28) sterol reductases erg4A and erg4B to produce ergosterol. Possible alternative sterol biosynthetic pathways might exist from fecosterol to ergosterol, depending on the activities of the erg3 isoforms. The protein is Delta(7)-sterol 5(6)-desaturase erg3C of Aspergillus fumigatus (strain ATCC MYA-4609 / CBS 101355 / FGSC A1100 / Af293) (Neosartorya fumigata).